The sequence spans 834 residues: MTVEFEECVKDSPRFRATIDEVETDVVEIEAKLDKLVKLCSGMVEAGKAYVSTSRLFVSGVRDLSQQCQGDTVISECLQRFADSLQEVVNYHMILFDQAQRSVRQQLQSFVKEDVRKFKETKKQFDKVREDLELSLVRNAQAPRHRPHEVEEATGALTLTRKCFRHLALDYVLQINVLQAKKKFEILDSMLSFMHAQSSFFQQGYSLLHQLDPYMKKLAAELDQLVIDSAVEKREMERKHAAIQQRTLLQDFSYDESKVEFDVDAPSGVVMEGYLFKRASNAFKTWNRRWFSIQNSQLVYQKKLKDALTVVVDDLRLCSVKPCEDIERRFCFEVLSPTKSCMLQADSEKLRQAWVQAVQASIASAYRESPDSCYSERLDRTASPSTSSIDSATDTRERGVKGESVLQRVQSVAGNSQCGDCGQPDPRWASINLGVLLCIECSGIHRSLGVHCSKVRSLTLDSWEPELLKLMCELGNSAVNQIYEAQCEGAGSRKPTASSSRQDKEAWIKDKYVEKKFLRKAPMAPALEAPRRWRVQKCLRPHSSPRAPTARRKVRLEPVLPCVAALSSVGTLDRKFRRDSLFCPDELDSLFSYFDAGAAGAGPRSLSSDSGLGGSSDGSSDVLAFGSGSVVDSVTEEEGAESEESSGEADGDTEAEAWGLADVRELHPGLLAHRAARARDLPALAAALAHGAEVNWADAEDEGKTPLVQAVLGGSLIVCEFLLQNGADVNQRDSRGRAPLHHATLLGRTGQVCLFLKRGADQHALDQEQRDPLAIAVQAANADIVTLLRLARMAEEMREAEAAPGPPGALAGSPTELQFRRCIQEFISLHLEES.

The PH domain occupies Gly-268–Ala-363. The disordered stretch occupies residues Ser-375–Val-400. The segment covering Ala-382–Ala-392 has biased composition (polar residues). One can recognise an Arf-GAP domain in the interval Glu-403–Pro-525. A C4-type zinc finger spans residues Cys-418–Cys-441. The segment at Ser-633 to Thr-653 is disordered. Residues Val-634–Thr-653 are compositionally biased toward acidic residues. 3 ANK repeats span residues Glu-702–Gln-731, Arg-735–Ala-764, and Glu-768–Met-797.

In terms of biological role, GTPase-activating protein for the ADP ribosylation factor family. The chain is Arf-GAP with coiled-coil, ANK repeat and PH domain-containing protein 3 (ACAP3) from Homo sapiens (Human).